A 513-amino-acid chain; its full sequence is Maturase K (513 aa).

The protein belongs to the intron maturase 2 family. MatK subfamily.

Its subcellular location is the plastid. The protein localises to the chloroplast. Its function is as follows. Usually encoded in the trnK tRNA gene intron. Probably assists in splicing its own and other chloroplast group II introns. The protein is Maturase K of Phragmites australis (Common reed).